A 703-amino-acid polypeptide reads, in one-letter code: Polyribonucleotide nucleotidyltransferase (703 aa).

Asp-484 and Asp-490 together coordinate Mg(2+). The region spanning 551 to 610 (PQMIRMQIDPDKIREVIGPGGKTIHKIVDETGCKIDIEDDGSLFIMATDEEAAKKARFFV) is the KH domain. Residues 620 to 694 (GKTYMGTVKR…RQGRVNLSRK (75 aa)) form the S1 motif domain.

The protein belongs to the polyribonucleotide nucleotidyltransferase family. It depends on Mg(2+) as a cofactor.

The protein localises to the cytoplasm. It carries out the reaction RNA(n+1) + phosphate = RNA(n) + a ribonucleoside 5'-diphosphate. Involved in mRNA degradation. Catalyzes the phosphorolysis of single-stranded polyribonucleotides processively in the 3'- to 5'-direction. This Syntrophomonas wolfei subsp. wolfei (strain DSM 2245B / Goettingen) protein is Polyribonucleotide nucleotidyltransferase.